The chain runs to 166 residues: Large ribosomal subunit protein uL10 (166 aa).

Belongs to the universal ribosomal protein uL10 family. As to quaternary structure, part of the ribosomal stalk of the 50S ribosomal subunit. The N-terminus interacts with L11 and the large rRNA to form the base of the stalk. The C-terminus forms an elongated spine to which L12 dimers bind in a sequential fashion forming a multimeric L10(L12)X complex.

In terms of biological role, forms part of the ribosomal stalk, playing a central role in the interaction of the ribosome with GTP-bound translation factors. The protein is Large ribosomal subunit protein uL10 of Bacillus mycoides (strain KBAB4) (Bacillus weihenstephanensis).